Here is a 118-residue protein sequence, read N- to C-terminus: UPF0342 protein BpOF4_11360 (118 aa).

Belongs to the UPF0342 family.

This is UPF0342 protein BpOF4_11360 from Alkalihalophilus pseudofirmus (strain ATCC BAA-2126 / JCM 17055 / OF4) (Bacillus pseudofirmus).